Consider the following 709-residue polypeptide: Nicastrin (709 aa).

The N-terminal stretch at 1–33 is a signal peptide; sequence MATAGGGSGADPGSRGLLRLLSFCVLLAGLCRG. Topologically, residues 34-669 are extracellular; sequence NSVERKIYIP…IFLIASKELE (636 aa). Residues N45 and N55 are each glycosylated (N-linked (GlcNAc...) asparagine). 2 disulfide bridges follow: C50–C62 and C140–C159. N-linked (GlcNAc...) asparagine glycosylation is found at N187, N200, and N204. Cystine bridges form between C195/C213 and C230/C248. N-linked (GlcNAc...) asparagine glycosylation is found at N264, N387, N417, N435, N464, N506, N530, N562, N573, N580, and N612. The cysteines at positions 586 and 620 are disulfide-linked. Residues 670-690 form a helical membrane-spanning segment; the sequence is LITLTVGFGILIFSLIVTYCI. Topologically, residues 691–709 are cytoplasmic; it reads NAKADVLFIAPREPGAVSY.

This sequence belongs to the nicastrin family. In terms of assembly, component of the gamma-secretase complex. The functional gamma-secretase complex is composed of at least four polypeptides: a presenilin homodimer (PSEN1 or PSEN2), nicastrin (NCSTN), APH1 (APH1A or APH1B) and PSENEN/PEN2. Binds to proteolytic processed C-terminal fragments C83 and C99 of the amyloid precursor protein (APP). Interacts with PSEN1 and PSEN2. Post-translationally, N-glycosylated. In terms of tissue distribution, detected in brain (at protein level). Widely expressed.

The protein resides in the membrane. Its subcellular location is the cytoplasmic vesicle membrane. The protein localises to the melanosome. In terms of biological role, essential subunit of the gamma-secretase complex, an endoprotease complex that catalyzes the intramembrane cleavage of integral membrane proteins such as Notch receptors and APP (amyloid-beta precursor protein). The gamma-secretase complex plays a role in Notch and Wnt signaling cascades and regulation of downstream processes via its role in processing key regulatory proteins, and by regulating cytosolic CTNNB1 levels. This chain is Nicastrin (NCSTN), found in Homo sapiens (Human).